The chain runs to 272 residues: Nitrogenase iron protein (272 aa).

Gly8–Ser15 contributes to the ATP binding site. Cys94 is a [4Fe-4S] cluster binding site. Arg97 is modified (ADP-ribosylarginine; by dinitrogenase reductase ADP-ribosyltransferase). A [4Fe-4S] cluster-binding site is contributed by Cys129.

This sequence belongs to the NifH/BchL/ChlL family. As to quaternary structure, homodimer. [4Fe-4S] cluster serves as cofactor. In terms of processing, the reversible ADP-ribosylation of Arg-97 inactivates the nitrogenase reductase and regulates nitrogenase activity.

It carries out the reaction N2 + 8 reduced [2Fe-2S]-[ferredoxin] + 16 ATP + 16 H2O = H2 + 8 oxidized [2Fe-2S]-[ferredoxin] + 2 NH4(+) + 16 ADP + 16 phosphate + 6 H(+). In terms of biological role, the key enzymatic reactions in nitrogen fixation are catalyzed by the nitrogenase complex, which has 2 components: the iron protein and the molybdenum-iron protein. This is Nitrogenase iron protein from Clostridium acetobutylicum (strain ATCC 824 / DSM 792 / JCM 1419 / IAM 19013 / LMG 5710 / NBRC 13948 / NRRL B-527 / VKM B-1787 / 2291 / W).